The chain runs to 135 residues: U-scoloptoxin(22)-Er1a (135 aa).

A signal peptide spans 1–24 (MAVILKHLAIILLVFVIEIKMGQG). The interval 61–135 (PQITFSTDWG…RSPRYLPTII (75 aa)) is disordered. Positions 75 to 127 (SVNEDREAAERERSPQMKRSEHEEQLMAKDEMKRFQEERNPSSDDKIAIDKRS) are enriched in basic and acidic residues.

This sequence belongs to the scoloptoxin-22 family. Expressed by the venom gland.

The protein localises to the secreted. The protein is U-scoloptoxin(22)-Er1a of Ethmostigmus rubripes (Giant centipede).